The primary structure comprises 104 residues: Urease subunit beta (104 aa).

It belongs to the urease beta subunit family. As to quaternary structure, heterotrimer of UreA (gamma), UreB (beta) and UreC (alpha) subunits. Three heterotrimers associate to form the active enzyme.

The protein localises to the cytoplasm. The enzyme catalyses urea + 2 H2O + H(+) = hydrogencarbonate + 2 NH4(+). The protein operates within nitrogen metabolism; urea degradation; CO(2) and NH(3) from urea (urease route): step 1/1. In Mycobacterium bovis (strain BCG / Pasteur 1173P2), this protein is Urease subunit beta.